Here is a 150-residue protein sequence, read N- to C-terminus: UPF0201 protein APE_1751 (150 aa).

The protein belongs to the UPF0201 family.

This chain is UPF0201 protein APE_1751, found in Aeropyrum pernix (strain ATCC 700893 / DSM 11879 / JCM 9820 / NBRC 100138 / K1).